Reading from the N-terminus, the 318-residue chain is 4-hydroxy-3-methylbut-2-enyl diphosphate reductase (318 aa).

A [4Fe-4S] cluster-binding site is contributed by Cys12. (2E)-4-hydroxy-3-methylbut-2-enyl diphosphate contacts are provided by His41 and His74. Residues His41 and His74 each coordinate dimethylallyl diphosphate. 2 residues coordinate isopentenyl diphosphate: His41 and His74. Residue Cys96 participates in [4Fe-4S] cluster binding. His124 lines the (2E)-4-hydroxy-3-methylbut-2-enyl diphosphate pocket. His124 is a binding site for dimethylallyl diphosphate. Residue His124 participates in isopentenyl diphosphate binding. Glu126 serves as the catalytic Proton donor. Thr167 serves as a coordination point for (2E)-4-hydroxy-3-methylbut-2-enyl diphosphate. Cys197 is a [4Fe-4S] cluster binding site. (2E)-4-hydroxy-3-methylbut-2-enyl diphosphate is bound by residues Ser225, Ser226, Asn227, and Ser269. Dimethylallyl diphosphate contacts are provided by Ser225, Ser226, Asn227, and Ser269. Residues Ser225, Ser226, Asn227, and Ser269 each coordinate isopentenyl diphosphate.

This sequence belongs to the IspH family. [4Fe-4S] cluster serves as cofactor.

It carries out the reaction isopentenyl diphosphate + 2 oxidized [2Fe-2S]-[ferredoxin] + H2O = (2E)-4-hydroxy-3-methylbut-2-enyl diphosphate + 2 reduced [2Fe-2S]-[ferredoxin] + 2 H(+). The catalysed reaction is dimethylallyl diphosphate + 2 oxidized [2Fe-2S]-[ferredoxin] + H2O = (2E)-4-hydroxy-3-methylbut-2-enyl diphosphate + 2 reduced [2Fe-2S]-[ferredoxin] + 2 H(+). Its pathway is isoprenoid biosynthesis; dimethylallyl diphosphate biosynthesis; dimethylallyl diphosphate from (2E)-4-hydroxy-3-methylbutenyl diphosphate: step 1/1. It participates in isoprenoid biosynthesis; isopentenyl diphosphate biosynthesis via DXP pathway; isopentenyl diphosphate from 1-deoxy-D-xylulose 5-phosphate: step 6/6. In terms of biological role, catalyzes the conversion of 1-hydroxy-2-methyl-2-(E)-butenyl 4-diphosphate (HMBPP) into a mixture of isopentenyl diphosphate (IPP) and dimethylallyl diphosphate (DMAPP). Acts in the terminal step of the DOXP/MEP pathway for isoprenoid precursor biosynthesis. This chain is 4-hydroxy-3-methylbut-2-enyl diphosphate reductase, found in Francisella tularensis subsp. holarctica (strain LVS).